The primary structure comprises 54 residues: Ovomucoid (54 aa).

The Kazal-like domain maps to 4–54 (VDCSEYPKPVCSLEYMPLCGSDSQTYSNECNFCNAVVDSNGTLTLSHFGKC). Intrachain disulfides connect Cys-6-Cys-36, Cys-14-Cys-33, and Cys-22-Cys-54. Asn-43 is a glycosylation site (N-linked (GlcNAc...) asparagine).

The protein localises to the secreted. This chain is Ovomucoid, found in Caracara plancus (Southern caracara).